The following is a 549-amino-acid chain: CTP synthase (549 aa).

The segment at 1–267 (MAKFVFITGG…CREVLDVLNL (267 aa)) is amidoligase domain. Serine 13 contacts CTP. Serine 13 is a binding site for UTP. ATP is bound by residues 14-19 (SIGKGI) and aspartate 71. Positions 71 and 141 each coordinate Mg(2+). CTP-binding positions include 148-150 (DIE), 188-193 (KTKPTQ), and lysine 224. UTP-binding positions include 188-193 (KTKPTQ) and lysine 224. The Glutamine amidotransferase type-1 domain maps to 292 to 534 (KIALVGKYVQ…IEAAQQRLPD (243 aa)). Residue glycine 354 coordinates L-glutamine. The active-site Nucleophile; for glutamine hydrolysis is cysteine 381. L-glutamine contacts are provided by residues 382 to 385 (LGMQ), glutamate 405, and arginine 462. Residues histidine 507 and glutamate 509 contribute to the active site.

It belongs to the CTP synthase family. Homotetramer.

It catalyses the reaction UTP + L-glutamine + ATP + H2O = CTP + L-glutamate + ADP + phosphate + 2 H(+). The catalysed reaction is L-glutamine + H2O = L-glutamate + NH4(+). The enzyme catalyses UTP + NH4(+) + ATP = CTP + ADP + phosphate + 2 H(+). It functions in the pathway pyrimidine metabolism; CTP biosynthesis via de novo pathway; CTP from UDP: step 2/2. Its activity is regulated as follows. Allosterically activated by GTP, when glutamine is the substrate; GTP has no effect on the reaction when ammonia is the substrate. The allosteric effector GTP functions by stabilizing the protein conformation that binds the tetrahedral intermediate(s) formed during glutamine hydrolysis. Inhibited by the product CTP, via allosteric rather than competitive inhibition. Functionally, catalyzes the ATP-dependent amination of UTP to CTP with either L-glutamine or ammonia as the source of nitrogen. Regulates intracellular CTP levels through interactions with the four ribonucleotide triphosphates. The chain is CTP synthase from Synechococcus sp. (strain CC9605).